The chain runs to 715 residues: Fatty acid oxidation complex subunit alpha (715 aa).

The enoyl-CoA hydratase/isomerase stretch occupies residues 1–190 (MIYEGKAITV…KVGAVDAVVA (190 aa)). Residue Asp-297 coordinates substrate. Residues 312–715 (HDVKQAAVLG…MAKNGQRFFN (404 aa)) are 3-hydroxyacyl-CoA dehydrogenase. NAD(+) is bound by residues Met-325, Asp-344, 401–403 (VVE), Lys-408, and Ser-430. Residue His-451 is the For 3-hydroxyacyl-CoA dehydrogenase activity of the active site. Asn-454 serves as a coordination point for NAD(+). Substrate is bound by residues Asn-501 and Tyr-660.

This sequence in the N-terminal section; belongs to the enoyl-CoA hydratase/isomerase family. It in the C-terminal section; belongs to the 3-hydroxyacyl-CoA dehydrogenase family. Heterotetramer of two alpha chains (FadB) and two beta chains (FadA).

It carries out the reaction a (3S)-3-hydroxyacyl-CoA + NAD(+) = a 3-oxoacyl-CoA + NADH + H(+). It catalyses the reaction a (3S)-3-hydroxyacyl-CoA = a (2E)-enoyl-CoA + H2O. The enzyme catalyses a 4-saturated-(3S)-3-hydroxyacyl-CoA = a (3E)-enoyl-CoA + H2O. The catalysed reaction is (3S)-3-hydroxybutanoyl-CoA = (3R)-3-hydroxybutanoyl-CoA. It carries out the reaction a (3Z)-enoyl-CoA = a 4-saturated (2E)-enoyl-CoA. It catalyses the reaction a (3E)-enoyl-CoA = a 4-saturated (2E)-enoyl-CoA. It participates in lipid metabolism; fatty acid beta-oxidation. Involved in the aerobic and anaerobic degradation of long-chain fatty acids via beta-oxidation cycle. Catalyzes the formation of 3-oxoacyl-CoA from enoyl-CoA via L-3-hydroxyacyl-CoA. It can also use D-3-hydroxyacyl-CoA and cis-3-enoyl-CoA as substrate. The protein is Fatty acid oxidation complex subunit alpha of Pseudomonas putida (Arthrobacter siderocapsulatus).